A 242-amino-acid chain; its full sequence is tRNA (guanine-N(1)-)-methyltransferase (242 aa).

Residues G111 and 130-135 (IGDYVL) each bind S-adenosyl-L-methionine.

It belongs to the RNA methyltransferase TrmD family. Homodimer.

It localises to the cytoplasm. It catalyses the reaction guanosine(37) in tRNA + S-adenosyl-L-methionine = N(1)-methylguanosine(37) in tRNA + S-adenosyl-L-homocysteine + H(+). Functionally, specifically methylates guanosine-37 in various tRNAs. The polypeptide is tRNA (guanine-N(1)-)-methyltransferase (Aster yellows witches'-broom phytoplasma (strain AYWB)).